The primary structure comprises 1516 residues: AP-4 complex accessory subunit RUSC2 (1516 aa).

6 disordered regions span residues 33-105 (AGGG…PFLL), 202-224 (LDEC…SGFS), 229-248 (WKLS…SGDQ), 331-351 (SKMS…GYGC), 404-445 (LSSQ…PSEY), and 478-511 (GQVY…PVRL). The segment covering 66-81 (LFSSLHSTPGGTARSI) has biased composition (polar residues). The segment covering 82-92 (DSTKSRSRDGR) has biased composition (basic and acidic residues). The segment covering 206–217 (GGPGGSGSGGGA) has biased composition (gly residues). The segment covering 333 to 344 (MSYESHHPESGG) has biased composition (basic and acidic residues). A compositionally biased stretch (low complexity) spans 405 to 420 (SSQSSPSPAGSSITSC). The span at 428–440 (SPPPGPGPDPGPS) shows a compositional bias: pro residues. Over residues 480–493 (VYTNTSPPNLSTGR) the composition is skewed to polar residues. A phosphoserine mark is found at Ser536, Ser543, and Ser559. Disordered stretches follow at residues 550–588 (GRKK…APLD), 646–688 (LMDP…KEQR), 727–836 (RTQQ…PQKE), and 868–889 (ESLA…ANHL). Positions 567-579 (GDSSQEFSPIQEA) are enriched in polar residues. A Phosphoserine modification is found at Ser656. Residues 729-746 (QQPAPLAAPAAQVSVPAP) are compositionally biased toward low complexity. Ser781 carries the post-translational modification Phosphoserine. Residues 791–801 (PSTDSSASTSC) are compositionally biased toward low complexity. The 145-residue stretch at 1031–1175 (NVGHLVLKYL…LPFSLDLLFQ (145 aa)) folds into the RUN domain. Disordered stretches follow at residues 1210–1261 (RARG…GRAR), 1286–1408 (IEGS…LPSD), and 1422–1449 (QTVG…SSPP). Positions 1219 to 1230 (DVDRAAQGERVK) are enriched in basic and acidic residues. Over residues 1237-1251 (GGEEEEEEEETEEVA) the composition is skewed to acidic residues. Residues 1355 to 1364 (ELRRSREREG) show a composition bias toward basic and acidic residues. Ser1368 and Ser1380 each carry phosphoserine. A compositionally biased stretch (basic and acidic residues) spans 1426–1437 (SRREPEPKESLQ). Residues 1447-1506 (SPPCEVQALCHHLATGPGQLSFHKGDILRVLGRAGGDWLRCSRGPDSGLVPLAYVTLTPT) enclose the SH3 domain.

In terms of assembly, associated component of the adapter-like complex 4 (AP-4). Interacts with active RAB1A and RAB1B, and with GOLGA2. Interacts (via RUN domain) with RAB35 (GTP-bound form); the interaction recruits RUSC2 to the plasma membrane. Widely expressed, with highest levels in brain and testis.

The protein localises to the cytoplasm. It localises to the cytosol. It is found in the cell membrane. Functionally, associates with the adapter-like complex 4 (AP-4) and may therefore play a role in vesicular trafficking of proteins at the trans-Golgi network. The polypeptide is AP-4 complex accessory subunit RUSC2 (Homo sapiens (Human)).